Here is a 228-residue protein sequence, read N- to C-terminus: MTMGDKKSPTRPKRQAKPAADEGFWDCSVCTFRNSAEAFKCSICDVRKGTSTRKPRINSQLVAQQVAQQYATPPPPKKEKKEKVEKQDKEKPEKDKEISPSVTKKNTNKKTKPKSDILKDPPSEANSIQSANATTKTSETNHTSRPRLKNVDRSTAQQLAVTVGNVTVIITDFKEKTRSSSTSSSTVTSSAGSEQQNQSSSGSESTDKGSSRSSTPKGDMSAVNDESF.

Disordered regions lie at residues 1 to 21, 65 to 156, and 172 to 228; these read MTMGDKKSPTRPKRQAKPAAD, QVAQ…RSTA, and DFKE…DESF. The segment at 21-50 adopts a RanBP2-type zinc-finger fold; sequence DEGFWDCSVCTFRNSAEAFKCSICDVRKGT. Over residues 76-98 the composition is skewed to basic and acidic residues; it reads PKKEKKEKVEKQDKEKPEKDKEI. Residue K77 forms a Glycyl lysine isopeptide (Lys-Gly) (interchain with G-Cter in SUMO2) linkage. The residue at position 99 (S99) is a Phosphoserine. The span at 113-122 shows a compositional bias: basic and acidic residues; it reads PKSDILKDPP. S123, S127, and S130 each carry phosphoserine. The span at 124-143 shows a compositional bias: polar residues; that stretch reads EANSIQSANATTKTSETNHT. Residues 143–226 are interaction with GABPB1 and FANK1; the sequence is TSRPRLKNVD…KGDMSAVNDE (84 aa). The segment covering 179–204 has biased composition (low complexity); the sequence is SSSTSSSTVTSSAGSEQQNQSSSGSE. S227 bears the Phosphoserine mark.

As to quaternary structure, monomer. Component of repressive BCOR complex containing Polycomb group subcomplex at least composed of BCOR, PCGF1, RING1 and RNF2/RING2. Component of PCR1-like complexes. Interacts with PCGF1. Part of a PCR1-like complex that contains AUTS2, PCGF5, RNF2, CSNK2B and RYBP. Interacts with RNF2; the interaction is direct. Interacts with CBX2, YAF2, RING1 and RNF2. Interacts with ubiquitin and ubiquitinated proteins. Interacts with ubiquitinated histone H2A. Interacts with apoptin, DEDD, FADD, CASP8, CASP10, YY1 and GABPB1. Together with GABPB1 and YY1, it forms a ternary complex, probably being the bridge factor between these two transcription factors. Interacts with MDM2, and thereby inhibits ubiquitination of TP53. Identified in a ternary complex containing MDM2, TP53 and RYBP. Interacts with FANK1; may prevent the ubiquitin-mediated proteasomal degradation of FANK1. Interacts with IFT57. Monoubiquitinated. As to expression, down-regulated in breast cancer tissues and in several breast cancer cell lines (at protein level). Widely expressed with highest levels in lymphoid tissues and placenta.

It is found in the nucleus. Its subcellular location is the cytoplasm. It localises to the nucleoplasm. Functionally, component of a Polycomb group (PcG) multiprotein PRC1-like complex, a complex class required to maintain the transcriptionally repressive state of many genes, including Hox genes, throughout development. PcG PRC1-like complex acts via chromatin remodeling and modification of histones; it mediates monoubiquitination of histone H2A 'Lys-119', rendering chromatin heritably changed in its expressibility. Component of a PRC1-like complex that mediates monoubiquitination of histone H2A 'Lys-119' on the X chromosome and is required for normal silencing of one copy of the X chromosome in XX females. May stimulate ubiquitination of histone H2A 'Lys-119' by recruiting the complex to target sites. Inhibits ubiquitination and subsequent degradation of TP53, and thereby plays a role in regulating transcription of TP53 target genes. May also regulate the ubiquitin-mediated proteasomal degradation of other proteins like FANK1 to regulate apoptosis. May be implicated in the regulation of the transcription as a repressor of the transcriptional activity of E4TF1. May bind to DNA. May play a role in the repression of tumor growth and metastasis in breast cancer by down-regulating SRRM3. This chain is RING1 and YY1-binding protein (RYBP), found in Homo sapiens (Human).